The sequence spans 777 residues: uncharacterized protein (777 aa).

Disordered stretches follow at residues 1–101, 128–150, 219–267, 334–366, 391–466, 529–577, 590–622, and 713–751; these read MNNN…NLSN, SYNN…NDDN, HHIH…NNMN, SLPF…GIDD, ISNS…ATIS, KNLN…NNKG, LAQE…ISTI, and EKQG…KWKP. Composition is skewed to low complexity over residues 128–147 and 243–265; these read SYNN…NNIN and NNNN…NHNN. A compositionally biased stretch (polar residues) spans 334–343; that stretch reads SLPFSSLSDN. Over residues 344-366 the composition is skewed to acidic residues; the sequence is NGDDDDDGIDDGIDDGIDDGIDD. The span at 391–407 shows a compositional bias: polar residues; it reads ISNSFHQNQSPCNNSFK. 2 stretches are compositionally biased toward low complexity: residues 408–466 and 532–574; these read NNNN…ATIS and NNNN…NNKN. Residues 597–606 show a composition bias toward basic and acidic residues; the sequence is EQNKTKKELE. Composition is skewed to acidic residues over residues 607–620 and 718–730; these read EVKE…EEIS and DDPE…DSDS. Low complexity predominate over residues 731 to 740; the sequence is DSNSNSDSSD.

This is an uncharacterized protein from Dictyostelium discoideum (Social amoeba).